Here is a 1170-residue protein sequence, read N- to C-terminus: NPC intracellular sterol transporter 1-related protein 1 (1170 aa).

A signal peptide spans Met1 to Gly19. 8 disulfides stabilise this stretch: Cys23–Cys75, Cys29–Cys41, Cys64–Cys110, Cys76–Cys114, Cys98–Cys230, Cys101–Cys156, Cys223–Cys235, and Cys232–Cys239. N-linked (GlcNAc...) asparagine glycans are attached at residues Asn123, Asn145, and Asn178. The chain crosses the membrane as a helical span at residues Leu260 to Cys280. N-linked (GlcNAc...) asparagine glycosylation occurs at Asn314. The helical transmembrane segment at Ile341–Thr361 threads the bilayer. Asn401 carries N-linked (GlcNAc...) asparagine glycosylation. 2 disulfides stabilise this stretch: Cys438–Cys447 and Cys473–Cys480. N-linked (GlcNAc...) asparagine glycosylation occurs at Asn513. The next 6 helical transmembrane spans lie at Asn556 to Leu576, Leu585 to Phe605, Ile616 to Ile636, Ile667 to Pro687, Val698 to Tyr718, and Ile752 to Phe772. In terms of domain architecture, SSD spans Asp557–Leu717. Cystine bridges form between Cys822/Cys828, Cys868/Cys925, Cys869/Cys891, and Cys879/Cys888. N-linked (GlcNAc...) asparagine glycans are attached at residues Asn900 and Asn940. The next 5 helical transmembrane spans lie at Leu1000–Leu1020, Phe1027–Leu1047, Val1054–Val1074, Ile1099–Ala1119, and Met1133–Leu1153.

This sequence belongs to the patched family.

The protein localises to the vacuole membrane. Its function is as follows. Involved in sphingolipid trafficking. May recycle sphingolipids between cellular membranous compartments. The chain is NPC intracellular sterol transporter 1-related protein 1 from Saccharomyces cerevisiae (strain ATCC 204508 / S288c) (Baker's yeast).